The primary structure comprises 336 residues: Ketol-acid reductoisomerase (NADP(+)) (336 aa).

The 182-residue stretch at 1 to 182 folds into the KARI N-terminal Rossmann domain; the sequence is MAVIYYDKDA…GVTRAGVIET (182 aa). Residues 25–28, Arg48, Ser51, Ser53, and 83–86 each bind NADP(+); these read FGSQ and DEHQ. His108 is an active-site residue. Gly134 contacts NADP(+). Residues 183-328 enclose the KARI C-terminal knotted domain; the sequence is TFKEETETDL…KELRKMMPWL (146 aa). Residues Asp191, Glu195, Glu227, and Glu231 each contribute to the Mg(2+) site. A substrate-binding site is contributed by Ser252.

It belongs to the ketol-acid reductoisomerase family. Mg(2+) is required as a cofactor.

It carries out the reaction (2R)-2,3-dihydroxy-3-methylbutanoate + NADP(+) = (2S)-2-acetolactate + NADPH + H(+). The enzyme catalyses (2R,3R)-2,3-dihydroxy-3-methylpentanoate + NADP(+) = (S)-2-ethyl-2-hydroxy-3-oxobutanoate + NADPH + H(+). It functions in the pathway amino-acid biosynthesis; L-isoleucine biosynthesis; L-isoleucine from 2-oxobutanoate: step 2/4. Its pathway is amino-acid biosynthesis; L-valine biosynthesis; L-valine from pyruvate: step 2/4. Its function is as follows. Involved in the biosynthesis of branched-chain amino acids (BCAA). Catalyzes an alkyl-migration followed by a ketol-acid reduction of (S)-2-acetolactate (S2AL) to yield (R)-2,3-dihydroxy-isovalerate. In the isomerase reaction, S2AL is rearranged via a Mg-dependent methyl migration to produce 3-hydroxy-3-methyl-2-ketobutyrate (HMKB). In the reductase reaction, this 2-ketoacid undergoes a metal-dependent reduction by NADPH to yield (R)-2,3-dihydroxy-isovalerate. In Thermotoga neapolitana (strain ATCC 49049 / DSM 4359 / NBRC 107923 / NS-E), this protein is Ketol-acid reductoisomerase (NADP(+)).